The primary structure comprises 197 residues: Nucleoside triphosphate pyrophosphatase (197 aa).

The active-site Proton acceptor is aspartate 72.

The protein belongs to the Maf family. It depends on a divalent metal cation as a cofactor.

Its subcellular location is the cytoplasm. It carries out the reaction a ribonucleoside 5'-triphosphate + H2O = a ribonucleoside 5'-phosphate + diphosphate + H(+). It catalyses the reaction a 2'-deoxyribonucleoside 5'-triphosphate + H2O = a 2'-deoxyribonucleoside 5'-phosphate + diphosphate + H(+). Nucleoside triphosphate pyrophosphatase. May have a dual role in cell division arrest and in preventing the incorporation of modified nucleotides into cellular nucleic acids. The protein is Nucleoside triphosphate pyrophosphatase of Corynebacterium efficiens (strain DSM 44549 / YS-314 / AJ 12310 / JCM 11189 / NBRC 100395).